Reading from the N-terminus, the 700-residue chain is Polyphosphate kinase (700 aa).

N45 is a binding site for ATP. Mg(2+) is bound by residues R373 and R403. The region spanning 428-462 (PGMKIHAKLLLITRREEQGFVRYAHIGTGNFHERT) is the PLD phosphodiesterase 1 domain. The active-site Phosphohistidine intermediate is the H433. ATP contacts are provided by Y466, R562, and H590. A PLD phosphodiesterase 2 domain is found at 585 to 615 (DRFLEHPRVLVVHNDGDPQVFISSADWMERN).

Belongs to the polyphosphate kinase 1 (PPK1) family. Mg(2+) serves as cofactor. An intermediate of this reaction is the autophosphorylated ppk in which a phosphate is covalently linked to a histidine residue through a N-P bond.

The catalysed reaction is [phosphate](n) + ATP = [phosphate](n+1) + ADP. Catalyzes the reversible transfer of the terminal phosphate of ATP to form a long-chain polyphosphate (polyP). In Vibrio vulnificus (strain CMCP6), this protein is Polyphosphate kinase.